Consider the following 676-residue polypeptide: Envelope glycoprotein (676 aa).

A signal peptide spans 1–32; it reads MEGLSLLQLPRDKFRKSSFFVWVIILFQKAFS. Over 33 to 650 the chain is Extracellular; that stretch reads MPLGVVTNST…DDNWWTGWRQ (618 aa). An N-linked (GlcNAc...) asparagine; by host glycan is attached at Asn40. Cystine bridges form between Cys53-Cys609, Cys108-Cys135, Cys121-Cys147, Cys511-Cys556, and Cys601-Cys608. The interval 54 to 201 is receptor-binding; it reads KDHLASTDQL…TFLQSPPIRE (148 aa). 7 N-linked (GlcNAc...) asparagine; by host glycosylation sites follow: Asn204, Asn208, Asn238, Asn257, Asn268, Asn296, and Asn314. Residues 305-485 are mucin-like region; that stretch reads ELSFETLSLN…STSNGLITST (181 aa). The disordered stretch occupies residues 313-351; the sequence is LNETEDDDATSSRTTKGRISDRATRKYSDLVPKDSPGMV. The segment covering 330–344 has biased composition (basic and acidic residues); that stretch reads RISDRATRKYSDLVP. A glycan (N-linked (GlcNAc...) asparagine; by host) is linked at Asn366. Positions 406 to 458 are disordered; sequence SSSQILSSSPTMAPSPETQTSTTYTPKLPVMTTEESTTPPRNSPGSTTEAPTL. Composition is skewed to polar residues over residues 415–430 and 438–458; these read PTMA…TTYT and TEES…APTL. An N-linked (GlcNAc...) asparagine; by host glycan is attached at Asn463. Residues 524 to 539 are fusion peptide; sequence HNAAGIAWIPYFGPGA. The stretch at 554-595 forms a coiled coil; it reads LVCGLRQLANETTQALQLFLRATTELRTYTILNRKAIDFLLR. The N-linked (GlcNAc...) asparagine; by host glycan is linked to Asn563. Positions 615–634 form a coiled coil; the sequence is WTKNITDKINQIIHDFIDNP. Asn618 carries an N-linked (GlcNAc...) asparagine; by host glycan. A helical transmembrane segment spans residues 651-671; it reads WIPAGIGITGIIIAIIALLCV. Residues Cys670 and Cys672 are each lipidated (S-palmitoyl cysteine; by host). Residues 672–676 are Cytoplasmic-facing; that stretch reads CKLLC.

The protein belongs to the filoviruses glycoprotein family. In terms of assembly, homotrimer; each monomer consists of a GP1 and a GP2 subunit linked by disulfide bonds. The resulting peplomers (GP1,2) protrude from the virus surface as spikes. Interacts with host integrin alpha-V/ITGAV. Interacts with host CLEC10A. Binds also to host CD209 and CLEC4M/DC-SIGN(R). Interacts with host FOLR1. Interacts with BST2; this interaction inhibits the antiviral effect of BST2 and this allows viral release from infected cells. Interacts with host FCN1; this interaction enhances viral entry. Interacts with host TLR4; this interaction induces cell death in T-lymphocytes or proinflammatory cytokines and SOCS1 production in monocytes. As to quaternary structure, interacts with host entry receptor NPC1. GP1 and GP2delta are part of GP1,2delta soluble complexes released by ectodomain shedding. The signal peptide region modulates GP's high mannose glycosylation, thereby determining the efficiency of the interactions with DC-SIGN(R). In terms of processing, N-glycosylated. Post-translationally, O-glycosylated in the mucin-like region. Palmitoylation of GP2 is not required for its function. In terms of processing, specific enzymatic cleavages in vivo yield mature proteins. The precursor is processed into GP1 and GP2 by host cell furin in the trans Golgi, and maybe by other host proteases, to yield the mature GP1 and GP2 proteins. The cleavage site corresponds to the furin optimal cleavage sequence [KR]-X-[KR]-R. This cleavage does not seem to be required for function. After the internalization of the virus into cell endosomes, GP1 C-terminus is removed by the endosomal proteases cathepsin B, cathepsin L, or both, leaving a 19-kDa N-terminal fragment which is further digested by cathepsin B. Proteolytic processing of GP1,2 by host ADAM17 can remove the transmembrane anchor of GP2 and leads to shedding of complexes consisting in GP1 and truncated GP2 (GP1,2delta).

It is found in the virion membrane. The protein resides in the host cell membrane. Its subcellular location is the secreted. In terms of biological role, trimeric GP1,2 complexes form the virion surface spikes and mediate the viral entry processes, with GP1 acting as the receptor-binding subunit and GP2 as the membrane fusion subunit. At later times of infection, down-regulates the expression of various host cell surface molecules that are essential for immune surveillance and cell adhesion. Down-modulates several integrins including ITGA1, ITGA2, ITGA3, ITGA4, ITGA5, ITGA6, ITGAV and ITGB1. This decrease in cell adhesion molecules may lead to cell detachment, contributing to the disruption of blood vessel integrity and hemorrhages developed during infection (cytotoxicity). Interacts with host TLR4 and thereby stimulates the differentiation and activation of monocytes leading to bystander death of T-lymphocytes. Down-regulates as well the function of host natural killer cells. Counteracts the antiviral effect of host BST2/tetherin that restricts release of progeny virions from infected cells. However, cooperates with VP40 and host BST2 to activate canonical NF-kappa-B pathway in a manner dependent on neddylation. Functionally, functions as a decoy for anti-GP1,2 antibodies thereby contributing to viral immune evasion. Interacts and activates host macrophages and dendritic cells inducing up-regulation of cytokine transcription. This effect is mediated throught activation of host TLR4. Responsible for binding to the receptor(s) on target cells. Interacts with CD209/DC-SIGN and CLEC4M/DC-SIGNR which act as cofactors for virus entry into dendritic cells (DCs) and endothelial cells. Binding to the macrophage specific lectin CLEC10A also seem to enhance virus infectivity. Interaction with FOLR1/folate receptor alpha may be a cofactor for virus entry in some cell types, although results are contradictory. Members of the Tyro3 receptor tyrosine kinase family also seem to be cell entry factors in filovirus infection. Once attached, the virions are internalized through clathrin-dependent endocytosis and/or macropinocytosis. After internalization of the virus into the endosomes of the host cell, proteolysis of GP1 by two cysteine proteases, CTSB/cathepsin B and CTSL/cathepsin L removes the glycan cap and allows GP1 binding to the host entry receptor NPC1. NPC1-binding, Ca(2+) and acidic pH induce a conformational change of GP2, which unmasks its fusion peptide and permit membranes fusion. Its function is as follows. Acts as a class I viral fusion protein. Under the current model, the protein has at least 3 conformational states: pre-fusion native state, pre-hairpin intermediate state, and post-fusion hairpin state. During viral and target cell membrane fusion, the coiled coil regions (heptad repeats) assume a trimer-of-hairpins structure, positioning the fusion peptide in close proximity to the C-terminal region of the ectodomain. The formation of this structure appears to drive apposition and subsequent fusion of viral and target cell membranes. Responsible for penetration of the virus into the cell cytoplasm by mediating the fusion of the membrane of the endocytosed virus particle with the endosomal membrane. Low pH in endosomes induces an irreversible conformational change in GP2, releasing the fusion hydrophobic peptide. The protein is Envelope glycoprotein (GP) of Epomops franqueti (Franquet's epauletted fruit bat).